A 1454-amino-acid chain; its full sequence is ABC transporter G family member 43 (1454 aa).

The interval 23-47 (ARSLRDGDDPFRRSAAASRRDAGDD) is disordered. Residues 25–44 (SLRDGDDPFRRSAAASRRDA) show a composition bias toward basic and acidic residues. Asn-163 carries an N-linked (GlcNAc...) asparagine glycan. The region spanning 170–444 (EGLVSLFISS…FESAGFRCPE (275 aa)) is the ABC transporter 1 domain. 204-211 (GPPSSGKS) contacts ATP. Asn-393 is a glycosylation site (N-linked (GlcNAc...) asparagine). The ABC transmembrane type-2 1 domain maps to 524–735 (LKAVMSREWL…SNNALSVNEF (212 aa)). 6 helical membrane-spanning segments follow: residues 540 to 560 (FLFIFKAFQLFVLGFITMTLF), 577 to 597 (VGALTASLITIMFNGFGELQL), 613 to 630 (FFPAWTYGLANIILKVPL), 637 to 656 (LWIVLTYYVVGFAPAAGRFF), 659 to 679 (FLAYFWTHQMALALFRLLGAI), and 684 to 704 (VVANTFGMFVLLLIFLFGGFL). Asn-745 carries an N-linked (GlcNAc...) asparagine glycan. A helical membrane pass occupies residues 775–795 (IGAMIGFMIVFNILYLCALTF). Residues 804–823 (TVVSDDDTKSELEAESNQEQ) are disordered. Residues Asn-829 and Asn-832 are each glycosylated (N-linked (GlcNAc...) asparagine). In terms of domain architecture, ABC transporter 2 spans 852 to 1104 (LSFNHMNYYV…ILVEYFEAIP (253 aa)). 897–904 (GVSGAGKT) contributes to the ATP binding site. A glycan (N-linked (GlcNAc...) asparagine) is linked at Asn-951. One can recognise an ABC transmembrane type-2 2 domain in the interval 1178-1391 (QCVANTWKQF…TIYGVIASQF (214 aa)). 7 helical membrane-spanning segments follow: residues 1196–1216 (YNAMRYVMTLLYGLVFGTVFW), 1236–1256 (YAAVFFLGAANLLTLLPVVSV), 1284–1304 (FCYSAVQGVLYTILIYSMIGY), 1314–1334 (FLFFMIAAFAYFTLFSMMLVA), 1341–1361 (LAAVLVSFVLSSWNNFAGFII), 1372–1392 (WFYWANPVSWTIYGVIASQFA), and 1423–1443 (FLGYVVLAHFGYVIIFFFLFG).

The protein belongs to the ABC transporter superfamily. ABCG family. PDR (TC 3.A.1.205) subfamily. In terms of tissue distribution, specifically expressed in the vasculature of roots, stems, panicles, sheaths and leaves.

Its subcellular location is the cell membrane. Its function is as follows. ABC transporter modulating cadmium (Cd) import, thus controlling Cd(2+) accumulation to prevent phytotoxicity. Confers high tolerance to Cd in yeast. Prevents leaf bacteria proliferation, such as Xanthomonas oryzae pv. oryzicola (Xoc) RS105 and X.oryzae pv. oryzae (Xoo) PXO99, by triggering Cd accumulation, which in turn impairs bacterial virulence factors. In Oryza sativa subsp. japonica (Rice), this protein is ABC transporter G family member 43.